The following is a 688-amino-acid chain: Elongation factor G (688 aa).

In terms of domain architecture, tr-type G spans 8 to 282 (EKFRNFGIMA…GVVDYLPSPL (275 aa)). Residues 17 to 24 (AHIDAGKT), 81 to 85 (DTPGH), and 135 to 138 (NKMD) contribute to the GTP site.

It belongs to the TRAFAC class translation factor GTPase superfamily. Classic translation factor GTPase family. EF-G/EF-2 subfamily.

It is found in the cytoplasm. In terms of biological role, catalyzes the GTP-dependent ribosomal translocation step during translation elongation. During this step, the ribosome changes from the pre-translocational (PRE) to the post-translocational (POST) state as the newly formed A-site-bound peptidyl-tRNA and P-site-bound deacylated tRNA move to the P and E sites, respectively. Catalyzes the coordinated movement of the two tRNA molecules, the mRNA and conformational changes in the ribosome. This Clostridium perfringens (strain 13 / Type A) protein is Elongation factor G.